A 119-amino-acid polypeptide reads, in one-letter code: Large ribosomal subunit protein bL20 (119 aa).

This sequence belongs to the bacterial ribosomal protein bL20 family.

Binds directly to 23S ribosomal RNA and is necessary for the in vitro assembly process of the 50S ribosomal subunit. It is not involved in the protein synthesizing functions of that subunit. This Methylocella silvestris (strain DSM 15510 / CIP 108128 / LMG 27833 / NCIMB 13906 / BL2) protein is Large ribosomal subunit protein bL20.